Here is a 447-residue protein sequence, read N- to C-terminus: Probable glycine dehydrogenase (decarboxylating) subunit 1 (447 aa).

It belongs to the GcvP family. N-terminal subunit subfamily. The glycine cleavage system is composed of four proteins: P, T, L and H. In this organism, the P 'protein' is a heterodimer of two subunits.

It catalyses the reaction N(6)-[(R)-lipoyl]-L-lysyl-[glycine-cleavage complex H protein] + glycine + H(+) = N(6)-[(R)-S(8)-aminomethyldihydrolipoyl]-L-lysyl-[glycine-cleavage complex H protein] + CO2. In terms of biological role, the glycine cleavage system catalyzes the degradation of glycine. The P protein binds the alpha-amino group of glycine through its pyridoxal phosphate cofactor; CO(2) is released and the remaining methylamine moiety is then transferred to the lipoamide cofactor of the H protein. The sequence is that of Probable glycine dehydrogenase (decarboxylating) subunit 1 from Bacillus thuringiensis subsp. konkukian (strain 97-27).